The following is a 428-amino-acid chain: Serine--tRNA ligase (428 aa).

An L-serine-binding site is contributed by 231–233 (TAE). Residue 262–264 (RSE) participates in ATP binding. Glu-285 lines the L-serine pocket. Residue 349 to 352 (EISS) coordinates ATP. Ser-385 is a binding site for L-serine.

It belongs to the class-II aminoacyl-tRNA synthetase family. Type-1 seryl-tRNA synthetase subfamily. In terms of assembly, homodimer. The tRNA molecule binds across the dimer.

Its subcellular location is the cytoplasm. It carries out the reaction tRNA(Ser) + L-serine + ATP = L-seryl-tRNA(Ser) + AMP + diphosphate + H(+). It catalyses the reaction tRNA(Sec) + L-serine + ATP = L-seryl-tRNA(Sec) + AMP + diphosphate + H(+). The protein operates within aminoacyl-tRNA biosynthesis; selenocysteinyl-tRNA(Sec) biosynthesis; L-seryl-tRNA(Sec) from L-serine and tRNA(Sec): step 1/1. In terms of biological role, catalyzes the attachment of serine to tRNA(Ser). Is also able to aminoacylate tRNA(Sec) with serine, to form the misacylated tRNA L-seryl-tRNA(Sec), which will be further converted into selenocysteinyl-tRNA(Sec). This Staphylococcus epidermidis (strain ATCC 35984 / DSM 28319 / BCRC 17069 / CCUG 31568 / BM 3577 / RP62A) protein is Serine--tRNA ligase.